A 577-amino-acid chain; its full sequence is Proline--tRNA ligase (577 aa).

This sequence belongs to the class-II aminoacyl-tRNA synthetase family. ProS type 1 subfamily. As to quaternary structure, homodimer.

The protein localises to the cytoplasm. The enzyme catalyses tRNA(Pro) + L-proline + ATP = L-prolyl-tRNA(Pro) + AMP + diphosphate. Catalyzes the attachment of proline to tRNA(Pro) in a two-step reaction: proline is first activated by ATP to form Pro-AMP and then transferred to the acceptor end of tRNA(Pro). As ProRS can inadvertently accommodate and process non-cognate amino acids such as alanine and cysteine, to avoid such errors it has two additional distinct editing activities against alanine. One activity is designated as 'pretransfer' editing and involves the tRNA(Pro)-independent hydrolysis of activated Ala-AMP. The other activity is designated 'posttransfer' editing and involves deacylation of mischarged Ala-tRNA(Pro). The misacylated Cys-tRNA(Pro) is not edited by ProRS. The chain is Proline--tRNA ligase from Thermotoga sp. (strain RQ2).